Here is a 225-residue protein sequence, read N- to C-terminus: Tryptophan synthase beta chain (225 aa).

This sequence belongs to the TrpB family. Tetramer of two alpha and two beta chains. Requires pyridoxal 5'-phosphate as cofactor.

It carries out the reaction (1S,2R)-1-C-(indol-3-yl)glycerol 3-phosphate + L-serine = D-glyceraldehyde 3-phosphate + L-tryptophan + H2O. It functions in the pathway amino-acid biosynthesis; L-tryptophan biosynthesis; L-tryptophan from chorismate: step 5/5. In terms of biological role, the beta subunit is responsible for the synthesis of L-tryptophan from indole and L-serine. The chain is Tryptophan synthase beta chain (trpB) from Buchnera aphidicola subsp. Rhopalosiphum maidis.